A 956-amino-acid polypeptide reads, in one-letter code: MAWFSGKVSLGGFPDLTGAVNKFQESVKNIEKNFDNALGFDDKSDSAAEDAASSMWPPAVDTKSLFDPVMSFMGNTSDEKPDTLEDSVRTENPSQIEQKEEEAGSVKLATEQAVSVEANKETNVRREADQADNPEVTETVVLDPKDDEPQSQILLEESSEYSLQTPESSGYKTSLQPNEKLEMTASQDSQPEQPKSEAEESQPEDSEAKEVTVENKDTVHSPVLDGQHKITYMDETTNEQEILGENLEGRTSSKNFEVSPDINHVNRIESPVAHPSLIFESDGSPYESSIPKRSSSDEISERIVDFVSREIDSRLDTSELNESQRSSSATNVSDSADVILELEKTKKEIKMLENALQGAARQAQAKADEIAKLMHENEQLKSVTEDLKRKSNEAEVESLREEYHQRVATLERKVYALTKERDTLRREQNKKSDAAALLKEKDEIINQVMAEGEELSKKQAAQEAQIRKLRAQIREAEEEKKGLITKLQSEENKVESIKRDKTATEKLLQETIEKHQAELTSQKDYYSNALAAAKEAQALAEERTNNEARSELENRLKEAGERESMLVQALEELRQTLSKKEQQAVYREDMFRGEIEDLQRRYQASERRCEELITQVPESTRPLLRQIEAMQETSYRTAEAWAAVERTLNSRLQEAESKAATAEERERSVNERLSQTLSRINVLEAQLSCLRAEQGQLSKSLEKERQRAAENRQEYLAAKEEADTLEGRANQLEVEIRELRRKHKQELQEVLLHNELIQKDLEREKASRLDLERTARINSSAVSEQLPIARQNSAFENGSLPRKLSSASSLGSMEESYFLQASLDSSDKFSEKRSMPEATMSPYYMKSITPSAYEATLRQKEGELASYMTRLASMESIRDSLAEELVKMTAECEKLRGEADRVPGIKAELEALRQRHAAALELMGERDEELEELRADIVDLKEMYREQVNMLVNKIQ.

Disordered stretches follow at residues 70–230 (MSFM…QHKI) and 278–298 (IFES…SSDE). Composition is skewed to basic and acidic residues over residues 77 to 89 (SDEK…DSVR) and 118 to 129 (ANKETNVRREAD). Composition is skewed to polar residues over residues 160 to 177 (EYSL…SLQP) and 184 to 193 (TASQDSQPEQ). The segment covering 206–219 (SEAKEVTVENKDTV) has biased composition (basic and acidic residues). A coiled-coil region spans residues 333-765 (SDSADVILEL…LIQKDLEREK (433 aa)). Serine 793 carries the phosphoserine modification. The stretch at 851–951 (SAYEATLRQK…EMYREQVNML (101 aa)) forms a coiled coil.

Interacts with RABH1B and RABH1C, but not with RABD1 or RABD2A.

It localises to the golgi apparatus. It is found in the cytoplasm. In terms of biological role, golgi matrix protein playing a role in tethering of vesicles to Golgi membranes and in maintaining the overall structure of the Golgi apparatus. This is Golgin candidate 5 (GC5) from Arabidopsis thaliana (Mouse-ear cress).